Here is a 369-residue protein sequence, read N- to C-terminus: Superinfection exclusion protein (369 aa).

The N-terminal stretch at 1–15 (MIALLILSLTCSVST) is a signal peptide.

The protein belongs to the serpin family. Orthopoxvirus OPG040 subfamily. As to quaternary structure, interacts with A56 protein.

The protein localises to the virion membrane. Its subcellular location is the host cell membrane. In terms of biological role, prevents cell to cell fusion via its interaction with A56 protein. The A56-K2 complex associates with components of the entry fusion complex (EFC) presumably to avoid superinfection and syncytium formation. The polypeptide is Superinfection exclusion protein (OPG040) (Vaccinia virus (strain Copenhagen) (VACV)).